Consider the following 352-residue polypeptide: Zona pellucida-binding protein 2 (352 aa).

An N-terminal signal peptide occupies residues 1–28 (MAGGGGRPCSPQRALLGMVAIMAVVAEA). N-linked (GlcNAc...) asparagine glycans are attached at residues N110 and N309.

The protein belongs to the zona pellucida-binding protein Sp38 family.

The protein localises to the secreted. Its subcellular location is the cytoplasmic vesicle. The protein resides in the secretory vesicle. It localises to the acrosome. Functionally, may be implicated in the gamete interaction during fertilization. This is Zona pellucida-binding protein 2 (ZPBP2) from Gallus gallus (Chicken).